We begin with the raw amino-acid sequence, 175 residues long: Large ribosomal subunit protein uL18 (175 aa).

This sequence belongs to the universal ribosomal protein uL18 family. Part of the 50S ribosomal subunit. Contacts the 5S and 23S rRNAs.

Its function is as follows. This is one of the proteins that bind and probably mediate the attachment of the 5S RNA into the large ribosomal subunit, where it forms part of the central protuberance. The protein is Large ribosomal subunit protein uL18 of Methanosphaerula palustris (strain ATCC BAA-1556 / DSM 19958 / E1-9c).